Reading from the N-terminus, the 1019-residue chain is Limulus clotting factor C (1019 aa).

Positions 1–25 are cleaved as a signal peptide; sequence MVLASFLVSGLVLGLLAQKMRPVQS. In terms of domain architecture, EGF-like spans 102 to 137; that stretch reads YGTWCSGECQCKNGGICDQRTGACACRDRYEGVHCE. Intrachain disulfides connect C106/C118, C112/C125, C127/C136, C142/C182, C168/C195, C199/C241, C227/C254, C260/C308, C294/C321, C331/C350, C354/C374, C436/C447, C464/C564, C538/C556, C576/C621, C607/C634, and C720/C748. 3 consecutive Sushi domains span residues 140–197, 198–256, and 258–323; these read KGCP…KCIR, ECAM…QCKN, and VFCP…SCVK. The region spanning 325–421 is the LCCL domain; sequence ADREVDCDSK…EELKSLARSF (97 aa). The C-type lectin domain occupies 436 to 568; sequence CPDGWFEVDE…PSSFACMMDL (133 aa). N-linked (GlcNAc...) asparagine glycosylation is found at N523 and N534. Sushi domains lie at 574–636 and 689–750; these read AKCD…RCIK and PRSS…SCIP. 3 N-linked (GlcNAc...) asparagine glycosylation sites follow: N624, N740, and N767. The Peptidase S1 domain maps to 763–1019; it reads IWNGNSTEIG…VFLSWIRQFI (257 aa). C794 and C810 form a disulfide bridge. Active-site charge relay system residues include H809 and D865. A glycan (N-linked (GlcNAc...) asparagine) is linked at N912. C932 and C951 are joined by a disulfide. D960 lines the substrate pocket. C962 and C996 are joined by a disulfide. The active-site Charge relay system is S966.

It belongs to the peptidase S1 family. As to quaternary structure, heterodimer of a light chain and a heavy chain linked by a disulfide bond.

Its subcellular location is the secreted. The enzyme catalyses Selective cleavage of 103-Arg-|-Ser-104 and 124-Ile-|-Ile-125 bonds in Limulus clotting factor B to form activated factor B. Cleavage of -Pro-Arg-|-Xaa- bonds in synthetic substrates.. With respect to regulation, activated by Gram-negative bacterial lipopolysaccharides and chymotrypsin. In terms of biological role, this enzyme is closely associated with an endotoxin-sensitive hemolymph coagulation system which may play important roles in both hemostasis and host defense mechanisms. Its active form catalyzes the activation of factor B. In Carcinoscorpius rotundicauda (Mangrove horseshoe crab), this protein is Limulus clotting factor C.